Here is a 44-residue protein sequence, read N- to C-terminus: Photosystem I reaction center subunit IX (44 aa).

Residues Tyr-7–Ile-27 form a helical membrane-spanning segment.

The protein belongs to the PsaJ family.

Its subcellular location is the plastid. It localises to the chloroplast thylakoid membrane. In terms of biological role, may help in the organization of the PsaE and PsaF subunits. This is Photosystem I reaction center subunit IX from Illicium oligandrum (Star anise).